The chain runs to 68 residues: MDLQDRVTDLESRLAFQDDTIETLNDILVTQQRAVERLQLQMTALLKRQEEMGGQFETSEEEAPPPHY.

This sequence belongs to the SlyX family.

The polypeptide is Protein SlyX homolog (Pseudomonas fluorescens (strain SBW25)).